Consider the following 324-residue polypeptide: Probable acrylyl-CoA reductase AcuI (324 aa).

Residues Tyr41, 156–159, 178–180, Arg198, Leu242, Ile256, Ser267, and Asn313 each bind NADP(+); these read SGGV and SGR.

The protein belongs to the zinc-containing alcohol dehydrogenase family. Acrylyl-CoA reductase subfamily. In terms of assembly, homodimer.

The protein localises to the cytoplasm. It catalyses the reaction propanoyl-CoA + NADP(+) = acryloyl-CoA + NADPH + H(+). Functionally, probably catalyzes the NADPH-dependent reduction of acrylyl-CoA to propanoyl-CoA. This is Probable acrylyl-CoA reductase AcuI (acuI) from Escherichia coli (strain K12).